We begin with the raw amino-acid sequence, 135 residues long: Antennal-specific protein OS-C (135 aa).

The N-terminal stretch at 1–27 (MGFHMGRQLLLSGFLLVMLQMVTQTQA) is a signal peptide. The segment at 43–84 (VIKREGDDDGDDDDSSSEETVEDSEESRRRRREVNTDNTPSA) is disordered. A compositionally biased stretch (acidic residues) spans 49–67 (DDDGDDDDSSSEETVEDSE).

In terms of tissue distribution, antenna. In the third antennal segment. Expressed in sencilla coeloconica.

This is Antennal-specific protein OS-C (Os-C) from Drosophila melanogaster (Fruit fly).